The primary structure comprises 256 residues: uncharacterized protein (256 aa).

Helical transmembrane passes span 155 to 175 and 203 to 223; these read ITGM…GLWL and ITTT…YLLI.

Its subcellular location is the cell membrane. This is an uncharacterized protein from Mycobacterium bovis (strain ATCC BAA-935 / AF2122/97).